A 422-amino-acid chain; its full sequence is Glutamate-1-semialdehyde 2,1-aminomutase (422 aa).

N6-(pyridoxal phosphate)lysine is present on Lys-264.

It belongs to the class-III pyridoxal-phosphate-dependent aminotransferase family. HemL subfamily. As to quaternary structure, homodimer. Requires pyridoxal 5'-phosphate as cofactor.

Its subcellular location is the cytoplasm. The catalysed reaction is (S)-4-amino-5-oxopentanoate = 5-aminolevulinate. Its pathway is porphyrin-containing compound metabolism; protoporphyrin-IX biosynthesis; 5-aminolevulinate from L-glutamyl-tRNA(Glu): step 2/2. In Clostridium acetobutylicum (strain ATCC 824 / DSM 792 / JCM 1419 / IAM 19013 / LMG 5710 / NBRC 13948 / NRRL B-527 / VKM B-1787 / 2291 / W), this protein is Glutamate-1-semialdehyde 2,1-aminomutase.